A 472-amino-acid polypeptide reads, in one-letter code: Zinc finger CCCH domain-containing protein 59 (472 aa).

Residues 87 to 139 (YKSPEGNRPRQNAANGSAKPQVIGTGHRVSNQPRKNAVYGPRSSSLSDTRGCG) are disordered. Residues 145-172 (SPKKSVCNFWKDGNCKKGEKCQFLHSWS) form a C3H1-type zinc finger. WD repeat units lie at residues 185–226 (GHKN…RSIN), 261–301 (HLEG…SDPF), 310–347 (HHSG…CRMT), 350–387 (QHIG…SLKV), and 436–472 (FSTQ…GTKV).

In Arabidopsis thaliana (Mouse-ear cress), this protein is Zinc finger CCCH domain-containing protein 59 (ZFWD3).